The following is a 154-amino-acid chain: Large ribosomal subunit protein uL30 (154 aa).

Residues 122 to 141 (RGGHDGIKTPASDGGQLGKH) form a disordered region.

Belongs to the universal ribosomal protein uL30 family. Part of the 50S ribosomal subunit.

This chain is Large ribosomal subunit protein uL30, found in Halobacterium salinarum (strain ATCC 29341 / DSM 671 / R1).